The primary structure comprises 302 residues: Sulfate adenylyltransferase subunit 2 (302 aa).

Residues 280 to 302 (RQGRLIDSDQSASMEQKKRQGYF) are disordered.

It belongs to the PAPS reductase family. CysD subfamily. In terms of assembly, heterodimer composed of CysD, the smaller subunit, and CysN.

The catalysed reaction is sulfate + ATP + H(+) = adenosine 5'-phosphosulfate + diphosphate. It participates in sulfur metabolism; hydrogen sulfide biosynthesis; sulfite from sulfate: step 1/3. Functionally, with CysN forms the ATP sulfurylase (ATPS) that catalyzes the adenylation of sulfate producing adenosine 5'-phosphosulfate (APS) and diphosphate, the first enzymatic step in sulfur assimilation pathway. APS synthesis involves the formation of a high-energy phosphoric-sulfuric acid anhydride bond driven by GTP hydrolysis by CysN coupled to ATP hydrolysis by CysD. This Shewanella baltica (strain OS195) protein is Sulfate adenylyltransferase subunit 2.